The sequence spans 99 residues: uncharacterized protein (99 aa).

Residues 1–17 (MMMNAFFPAMALMVLVG) form the signal peptide. The N-palmitoyl cysteine moiety is linked to residue cysteine 18. A lipid anchor (S-diacylglycerol cysteine) is attached at cysteine 18.

It localises to the cell membrane. This is an uncharacterized protein from Shigella flexneri.